We begin with the raw amino-acid sequence, 278 residues long: Phosphatidylglycerol--prolipoprotein diacylglyceryl transferase (278 aa).

4 consecutive transmembrane segments (helical) span residues 12–32 (FGPLTLRWYGLLIAMAVLIGL), 44–64 (LENGLISDLLPLLVLFSVIGA), 86–106 (IWEGGIAIHGALIAGTLTLIL), and 113–133 (QPFLDVLDVLAPSVALGQAIG). Arg134 lines the a 1,2-diacyl-sn-glycero-3-phospho-(1'-sn-glycerol) pocket. 3 helical membrane-spanning segments follow: residues 173 to 193 (PTFLYESIWNLLLFVLLLVLF), 203 to 223 (FPAGTLSCVYLIGYSLGRIWI), and 246 to 266 (IAQLMSAMLMVLGGLGLWWLK).

It belongs to the Lgt family.

It is found in the cell inner membrane. The catalysed reaction is L-cysteinyl-[prolipoprotein] + a 1,2-diacyl-sn-glycero-3-phospho-(1'-sn-glycerol) = an S-1,2-diacyl-sn-glyceryl-L-cysteinyl-[prolipoprotein] + sn-glycerol 1-phosphate + H(+). Its pathway is protein modification; lipoprotein biosynthesis (diacylglyceryl transfer). Its function is as follows. Catalyzes the transfer of the diacylglyceryl group from phosphatidylglycerol to the sulfhydryl group of the N-terminal cysteine of a prolipoprotein, the first step in the formation of mature lipoproteins. This chain is Phosphatidylglycerol--prolipoprotein diacylglyceryl transferase, found in Parasynechococcus marenigrum (strain WH8102).